The following is a 160-amino-acid chain: Lipoprotein signal peptidase (160 aa).

Helical transmembrane passes span 7–27 (WFWL…YITV), 39–59 (LWPG…FSFF), 62–82 (GAVW…FLGW), and 96–116 (GFIL…GYVV). Residues Asp-117 and Asp-133 contribute to the active site. Residues 126 to 146 (FPVFNLADTFINIGIFFLLLA) form a helical membrane-spanning segment.

It belongs to the peptidase A8 family.

It localises to the cell inner membrane. The enzyme catalyses Release of signal peptides from bacterial membrane prolipoproteins. Hydrolyzes -Xaa-Yaa-Zaa-|-(S,diacylglyceryl)Cys-, in which Xaa is hydrophobic (preferably Leu), and Yaa (Ala or Ser) and Zaa (Gly or Ala) have small, neutral side chains.. It functions in the pathway protein modification; lipoprotein biosynthesis (signal peptide cleavage). Functionally, this protein specifically catalyzes the removal of signal peptides from prolipoproteins. This Gloeothece citriformis (strain PCC 7424) (Cyanothece sp. (strain PCC 7424)) protein is Lipoprotein signal peptidase.